The sequence spans 169 residues: Lipoprotein signal peptidase (169 aa).

4 consecutive transmembrane segments (helical) span residues 4-24 (PICS…IVDL), 42-62 (LIPF…SFLA), 70-90 (WFFA…MYRS), and 102-122 (ALII…GAVI). Residues Asp-123 and Asp-141 contribute to the active site. Residues 137–157 (FNIADTAICIGAALVIFEGFI) form a helical membrane-spanning segment.

Belongs to the peptidase A8 family.

It localises to the cell inner membrane. The catalysed reaction is Release of signal peptides from bacterial membrane prolipoproteins. Hydrolyzes -Xaa-Yaa-Zaa-|-(S,diacylglyceryl)Cys-, in which Xaa is hydrophobic (preferably Leu), and Yaa (Ala or Ser) and Zaa (Gly or Ala) have small, neutral side chains.. It functions in the pathway protein modification; lipoprotein biosynthesis (signal peptide cleavage). In terms of biological role, this protein specifically catalyzes the removal of signal peptides from prolipoproteins. The polypeptide is Lipoprotein signal peptidase (Yersinia enterocolitica serotype O:8 / biotype 1B (strain NCTC 13174 / 8081)).